Consider the following 66-residue polypeptide: Large ribosomal subunit protein bL33c (66 aa).

This sequence belongs to the bacterial ribosomal protein bL33 family.

It is found in the plastid. The protein resides in the chloroplast. This is Large ribosomal subunit protein bL33c from Brachypodium distachyon (Purple false brome).